Here is a 321-residue protein sequence, read N- to C-terminus: Lipoyl synthase (321 aa).

7 residues coordinate [4Fe-4S] cluster: cysteine 68, cysteine 73, cysteine 79, cysteine 94, cysteine 98, cysteine 101, and serine 308. Positions 80-297 (FNHGTATFMI…KAEALAMGFT (218 aa)) constitute a Radical SAM core domain.

The protein belongs to the radical SAM superfamily. Lipoyl synthase family. Requires [4Fe-4S] cluster as cofactor.

It localises to the cytoplasm. The catalysed reaction is [[Fe-S] cluster scaffold protein carrying a second [4Fe-4S](2+) cluster] + N(6)-octanoyl-L-lysyl-[protein] + 2 oxidized [2Fe-2S]-[ferredoxin] + 2 S-adenosyl-L-methionine + 4 H(+) = [[Fe-S] cluster scaffold protein] + N(6)-[(R)-dihydrolipoyl]-L-lysyl-[protein] + 4 Fe(3+) + 2 hydrogen sulfide + 2 5'-deoxyadenosine + 2 L-methionine + 2 reduced [2Fe-2S]-[ferredoxin]. It functions in the pathway protein modification; protein lipoylation via endogenous pathway; protein N(6)-(lipoyl)lysine from octanoyl-[acyl-carrier-protein]: step 2/2. In terms of biological role, catalyzes the radical-mediated insertion of two sulfur atoms into the C-6 and C-8 positions of the octanoyl moiety bound to the lipoyl domains of lipoate-dependent enzymes, thereby converting the octanoylated domains into lipoylated derivatives. The chain is Lipoyl synthase from Edwardsiella ictaluri (strain 93-146).